The chain runs to 377 residues: Protein FAM199X-B (377 aa).

Basic and acidic residues predominate over residues 240-254 (KEHSPRQRCTRESWK). Residues 240-350 (KEHSPRQRCT…EQRQARKERI (111 aa)) are disordered. The segment covering 256–301 (TSYSTASTSGVSGASVSSSSASMVSTASSTGSSGGNSASNSSANMS) has biased composition (low complexity). The segment covering 319–338 (DSKKRSKQRKLQQKALRKRQ) has biased composition (basic residues). Residues 321 to 349 (KKRSKQRKLQQKALRKRQLKEQRQARKER) adopt a coiled-coil conformation. Basic and acidic residues predominate over residues 339-350 (LKEQRQARKERI).

The protein belongs to the FAM199 family.

The polypeptide is Protein FAM199X-B (fam199x-b) (Xenopus laevis (African clawed frog)).